Here is a 399-residue protein sequence, read N- to C-terminus: CCA-adding enzyme (399 aa).

ATP is bound by residues Gly-28 and Arg-31. 2 residues coordinate CTP: Gly-28 and Arg-31. Residues Asp-41 and Asp-43 each coordinate Mg(2+). ATP contacts are provided by Arg-112, Asp-155, Arg-158, Arg-161, and Arg-164. CTP-binding residues include Arg-112, Asp-155, Arg-158, Arg-161, and Arg-164.

This sequence belongs to the tRNA nucleotidyltransferase/poly(A) polymerase family. Bacterial CCA-adding enzyme type 3 subfamily. In terms of assembly, homodimer. Mg(2+) serves as cofactor.

It catalyses the reaction a tRNA precursor + 2 CTP + ATP = a tRNA with a 3' CCA end + 3 diphosphate. The enzyme catalyses a tRNA with a 3' CCA end + 2 CTP + ATP = a tRNA with a 3' CCACCA end + 3 diphosphate. Functionally, catalyzes the addition and repair of the essential 3'-terminal CCA sequence in tRNAs without using a nucleic acid template. Adds these three nucleotides in the order of C, C, and A to the tRNA nucleotide-73, using CTP and ATP as substrates and producing inorganic pyrophosphate. tRNA 3'-terminal CCA addition is required both for tRNA processing and repair. Also involved in tRNA surveillance by mediating tandem CCA addition to generate a CCACCA at the 3' terminus of unstable tRNAs. While stable tRNAs receive only 3'-terminal CCA, unstable tRNAs are marked with CCACCA and rapidly degraded. The sequence is that of CCA-adding enzyme from Staphylococcus saprophyticus subsp. saprophyticus (strain ATCC 15305 / DSM 20229 / NCIMB 8711 / NCTC 7292 / S-41).